The chain runs to 445 residues: D-serine dehydratase (445 aa).

The residue at position 118 (Lys118) is an N6-(pyridoxal phosphate)lysine.

Belongs to the serine/threonine dehydratase family. DsdA subfamily. In terms of assembly, monomer. The cofactor is pyridoxal 5'-phosphate.

The enzyme catalyses D-serine = pyruvate + NH4(+). The polypeptide is D-serine dehydratase (Serratia proteamaculans (strain 568)).